Here is a 190-residue protein sequence, read N- to C-terminus: Peptidyl-tRNA hydrolase (190 aa).

Tyr-14 is a tRNA binding site. His-19 (proton acceptor) is an active-site residue. 2 residues coordinate tRNA: Tyr-64 and Asn-66.

The protein belongs to the PTH family. In terms of assembly, monomer.

It localises to the cytoplasm. The enzyme catalyses an N-acyl-L-alpha-aminoacyl-tRNA + H2O = an N-acyl-L-amino acid + a tRNA + H(+). Its function is as follows. Hydrolyzes ribosome-free peptidyl-tRNAs (with 1 or more amino acids incorporated), which drop off the ribosome during protein synthesis, or as a result of ribosome stalling. In terms of biological role, catalyzes the release of premature peptidyl moieties from peptidyl-tRNA molecules trapped in stalled 50S ribosomal subunits, and thus maintains levels of free tRNAs and 50S ribosomes. In Rhodopirellula baltica (strain DSM 10527 / NCIMB 13988 / SH1), this protein is Peptidyl-tRNA hydrolase.